We begin with the raw amino-acid sequence, 347 residues long: S-adenosylmethionine:tRNA ribosyltransferase-isomerase (347 aa).

The protein belongs to the QueA family. In terms of assembly, monomer.

It localises to the cytoplasm. The catalysed reaction is 7-aminomethyl-7-carbaguanosine(34) in tRNA + S-adenosyl-L-methionine = epoxyqueuosine(34) in tRNA + adenine + L-methionine + 2 H(+). It participates in tRNA modification; tRNA-queuosine biosynthesis. In terms of biological role, transfers and isomerizes the ribose moiety from AdoMet to the 7-aminomethyl group of 7-deazaguanine (preQ1-tRNA) to give epoxyqueuosine (oQ-tRNA). The protein is S-adenosylmethionine:tRNA ribosyltransferase-isomerase of Pseudomonas aeruginosa (strain ATCC 15692 / DSM 22644 / CIP 104116 / JCM 14847 / LMG 12228 / 1C / PRS 101 / PAO1).